The sequence spans 273 residues: Transmembrane epididymal protein 1 (273 aa).

The next 6 helical transmembrane spans lie at 34–54 (IVTG…GMVL), 72–92 (LTMF…KNVL), 96–116 (CVGL…LLMV), 129–149 (VYSL…AELW), 158–178 (LMET…GFIL), and 195–215 (IMFV…FLLG).

It belongs to the TMEM45 family.

The protein resides in the membrane. This Homo sapiens (Human) protein is Transmembrane epididymal protein 1 (TEDDM1).